The chain runs to 175 residues: ATP synthase subunit delta (175 aa).

The protein belongs to the ATPase delta chain family. F-type ATPases have 2 components, F(1) - the catalytic core - and F(0) - the membrane proton channel. F(1) has five subunits: alpha(3), beta(3), gamma(1), delta(1), epsilon(1). F(0) has three main subunits: a(1), b(2) and c(10-14). The alpha and beta chains form an alternating ring which encloses part of the gamma chain. F(1) is attached to F(0) by a central stalk formed by the gamma and epsilon chains, while a peripheral stalk is formed by the delta and b chains.

The protein resides in the cell membrane. Its function is as follows. F(1)F(0) ATP synthase produces ATP from ADP in the presence of a proton or sodium gradient. F-type ATPases consist of two structural domains, F(1) containing the extramembraneous catalytic core and F(0) containing the membrane proton channel, linked together by a central stalk and a peripheral stalk. During catalysis, ATP synthesis in the catalytic domain of F(1) is coupled via a rotary mechanism of the central stalk subunits to proton translocation. In terms of biological role, this protein is part of the stalk that links CF(0) to CF(1). It either transmits conformational changes from CF(0) to CF(1) or is implicated in proton conduction. In Ruminiclostridium cellulolyticum (strain ATCC 35319 / DSM 5812 / JCM 6584 / H10) (Clostridium cellulolyticum), this protein is ATP synthase subunit delta.